The following is a 552-amino-acid chain: NADH-ubiquinone oxidoreductase chain 5 (552 aa).

15 consecutive transmembrane segments (helical) span residues 11 to 31 (PVTI…PFGL), 36 to 56 (LAMT…AYAI), 68 to 88 (FYII…SDNY), 89 to 109 (LMMF…ISFW), 121 to 141 (SAIL…GLMI), 152 to 172 (IALV…LLLL), 196 to 216 (TPVS…YVLV), 229 to 249 (LLII…IAIV), 256 to 274 (VIAL…AIGI), 287 to 307 (HAFF…SFVA), 322 to 342 (LPFS…IPGL), 365 to 386 (ILYY…RVLY), 406 to 426 (SLGM…IGYS), 453 to 473 (AYIK…LVYV), and 532 to 552 (SRAV…LFFI).

Belongs to the complex I subunit 5 family.

It is found in the mitochondrion inner membrane. It carries out the reaction a ubiquinone + NADH + 5 H(+)(in) = a ubiquinol + NAD(+) + 4 H(+)(out). In terms of biological role, core subunit of the mitochondrial membrane respiratory chain NADH dehydrogenase (Complex I) that is believed to belong to the minimal assembly required for catalysis. Complex I functions in the transfer of electrons from NADH to the respiratory chain. The immediate electron acceptor for the enzyme is believed to be ubiquinone. The chain is NADH-ubiquinone oxidoreductase chain 5 (NAD5) from Candida albicans (strain SC5314 / ATCC MYA-2876) (Yeast).